Reading from the N-terminus, the 1218-residue chain is DNA-directed RNA polymerase subunit beta' (1218 aa).

4 residues coordinate Zn(2+): cysteine 60, cysteine 62, cysteine 75, and cysteine 78. Positions 455, 457, and 459 each coordinate Mg(2+). Zn(2+) is bound by residues cysteine 824, cysteine 897, cysteine 904, and cysteine 907. Residues 1195–1218 form a disordered region; it reads ENEAQSDKSQDEQEIGEITVDMGE.

This sequence belongs to the RNA polymerase beta' chain family. In terms of assembly, the RNAP catalytic core consists of 2 alpha, 1 beta, 1 beta' and 1 omega subunit. When a sigma factor is associated with the core the holoenzyme is formed, which can initiate transcription. Requires Mg(2+) as cofactor. Zn(2+) serves as cofactor.

It catalyses the reaction RNA(n) + a ribonucleoside 5'-triphosphate = RNA(n+1) + diphosphate. In terms of biological role, DNA-dependent RNA polymerase catalyzes the transcription of DNA into RNA using the four ribonucleoside triphosphates as substrates. This is DNA-directed RNA polymerase subunit beta' from Natranaerobius thermophilus (strain ATCC BAA-1301 / DSM 18059 / JW/NM-WN-LF).